The primary structure comprises 97 residues: Large ribosomal subunit protein bL27 (97 aa).

A propeptide spanning residues 1–12 (MLKMNLANLQLF) is cleaved from the precursor. The disordered stretch occupies residues 14–37 (HKKGGGSTSNGRDSQAKRLGAKAA).

The protein belongs to the bacterial ribosomal protein bL27 family. Post-translationally, the N-terminus is cleaved by ribosomal processing cysteine protease Prp.

This Streptococcus uberis (strain ATCC BAA-854 / 0140J) protein is Large ribosomal subunit protein bL27.